A 190-amino-acid polypeptide reads, in one-letter code: GMP synthase [glutamine-hydrolyzing] subunit A (190 aa).

The 188-residue stretch at 2 to 189 (TILVINNKGQ…YEICKKRCNN (188 aa)) folds into the Glutamine amidotransferase type-1 domain. The active-site Nucleophile is cysteine 76. Catalysis depends on residues histidine 163 and glutamate 165.

Heterodimer composed of a glutamine amidotransferase subunit (A) and a GMP-binding subunit (B).

It carries out the reaction XMP + L-glutamine + ATP + H2O = GMP + L-glutamate + AMP + diphosphate + 2 H(+). Its pathway is purine metabolism; GMP biosynthesis; GMP from XMP (L-Gln route): step 1/1. Functionally, catalyzes the synthesis of GMP from XMP. This chain is GMP synthase [glutamine-hydrolyzing] subunit A, found in Methanobrevibacter smithii (strain ATCC 35061 / DSM 861 / OCM 144 / PS).